A 731-amino-acid chain; its full sequence is 1,4-alpha-glucan branching enzyme GlgB (731 aa).

Catalysis depends on aspartate 411, which acts as the Nucleophile. Glutamate 464 functions as the Proton donor in the catalytic mechanism.

This sequence belongs to the glycosyl hydrolase 13 family. GlgB subfamily. Monomer.

It catalyses the reaction Transfers a segment of a (1-&gt;4)-alpha-D-glucan chain to a primary hydroxy group in a similar glucan chain.. It functions in the pathway glycan biosynthesis; glycogen biosynthesis. Functionally, catalyzes the formation of the alpha-1,6-glucosidic linkages in glycogen by scission of a 1,4-alpha-linked oligosaccharide from growing alpha-1,4-glucan chains and the subsequent attachment of the oligosaccharide to the alpha-1,6 position. This chain is 1,4-alpha-glucan branching enzyme GlgB, found in Mycobacterium bovis (strain ATCC BAA-935 / AF2122/97).